Reading from the N-terminus, the 393-residue chain is uncharacterized protein (393 aa).

One can recognise a TRAM domain in the interval 12-70 (APLLGSKIKLNIEKLAIGGAGVARHEGMVVFVPQAAPNEEILAEITLVKKNFMEARVVE). Residues Cys-83, Cys-89, Cys-92, and Cys-166 each coordinate [4Fe-4S] cluster. The S-adenosyl-L-methionine site is built by Gln-221, Tyr-250, Glu-273, and Asp-316. Cys-343 serves as the catalytic Nucleophile.

The protein belongs to the class I-like SAM-binding methyltransferase superfamily. RNA M5U methyltransferase family.

This is an uncharacterized protein from Bdellovibrio bacteriovorus (strain ATCC 15356 / DSM 50701 / NCIMB 9529 / HD100).